The following is a 337-amino-acid chain: Probable phospholipase A1 magnifin (337 aa).

Positions methionine 1–serine 21 are cleaved as a signal peptide. Positions histidine 22–arginine 33 are excised as a propeptide. A disulfide bridge connects residues cysteine 39 and cysteine 123. Serine 173 (nucleophile) is an active-site residue. The active-site Charge relay system is aspartate 201. Disulfide bonds link cysteine 212–cysteine 217 and cysteine 255–cysteine 264. The active-site Charge relay system is histidine 266. Cystine bridges form between cysteine 281-cysteine 305, cysteine 282-cysteine 330, and cysteine 298-cysteine 303.

The protein belongs to the AB hydrolase superfamily. Lipase family. As to expression, expressed by the venom gland.

The protein localises to the secreted. It catalyses the reaction a 1,2-diacyl-sn-glycero-3-phosphocholine + H2O = a 2-acyl-sn-glycero-3-phosphocholine + a fatty acid + H(+). Its function is as follows. Catalyzes the hydrolysis of phosphatidylcholine with phospholipase A1 activity. May act as an allergen and induce hemolytic activity. In vivo, induces dose-dependent platelet aggregation (nanomolar concentration) and induces thrombosis. This chain is Probable phospholipase A1 magnifin, found in Vespa magnifica (Hornet).